The sequence spans 924 residues: Mediator of RNA polymerase II transcription subunit 16 (924 aa).

The protein belongs to the Mediator complex subunit 16 family. In terms of assembly, component of the Mediator complex.

The protein resides in the nucleus. Its function is as follows. Component of the Mediator complex, a coactivator involved in the regulated transcription of nearly all RNA polymerase II-dependent genes. Mediator functions as a bridge to convey information from gene-specific regulatory proteins to the basal RNA polymerase II transcription machinery. Mediator is recruited to promoters by direct interactions with regulatory proteins and serves as a scaffold for the assembly of a functional preinitiation complex with RNA polymerase II and the general transcription factors. In Yarrowia lipolytica (strain CLIB 122 / E 150) (Yeast), this protein is Mediator of RNA polymerase II transcription subunit 16 (SIN4).